Reading from the N-terminus, the 488-residue chain is Cysteine desulfurase, mitochondrial (488 aa).

Positions 25 to 52 are disordered; it reads LPKPLATSSSPATNAPNKTSNPKTGELH. Over residues 30-47 the composition is skewed to polar residues; it reads ATSSSPATNAPNKTSNPK. Residues 157–158, asparagine 237, glutamine 265, and 285–287 contribute to the pyridoxal 5'-phosphate site; these read AT and SSH. Lysine 288 is subject to N6-(pyridoxal phosphate)lysine. Position 325 (threonine 325) interacts with pyridoxal 5'-phosphate. Cysteine 412 functions as the Cysteine persulfide intermediate in the catalytic mechanism. Cysteine 412 is a [2Fe-2S] cluster binding site.

Belongs to the class-V pyridoxal-phosphate-dependent aminotransferase family. NifS/IscS subfamily. The cofactor is pyridoxal 5'-phosphate.

The protein localises to the mitochondrion. The enzyme catalyses (sulfur carrier)-H + L-cysteine = (sulfur carrier)-SH + L-alanine. In terms of biological role, catalyzes the removal of elemental sulfur from cysteine to produce alanine. It supplies the inorganic sulfur for iron-sulfur (Fe-S) clusters. Plays a role in both tRNA-processing and mitochondrial metabolism. Involved in the 2-thio-modification of both 5-carboxymethylaminomethyl-2-thiouridine in mitochondrial tRNAs and 5-methoxycarbonylmethyl-2-thiouridine (mcm5s2U) in cytoplasmic tRNAs. The sequence is that of Cysteine desulfurase, mitochondrial (NFS1) from Candida albicans (strain SC5314 / ATCC MYA-2876) (Yeast).